The chain runs to 177 residues: Large ribosomal subunit protein uL6 (177 aa).

A disordered region spans residues 151-177 (LRPPEPYKGKGVRYAGENVRRKEGKKK).

Belongs to the universal ribosomal protein uL6 family. As to quaternary structure, part of the 50S ribosomal subunit.

This protein binds to the 23S rRNA, and is important in its secondary structure. It is located near the subunit interface in the base of the L7/L12 stalk, and near the tRNA binding site of the peptidyltransferase center. This is Large ribosomal subunit protein uL6 from Phenylobacterium zucineum (strain HLK1).